A 197-amino-acid polypeptide reads, in one-letter code: Inner membrane protein p54 (197 aa).

A helical membrane pass occupies residues 32–52; that stretch reads YTILIAIVVLVIIIIVLIYLF. A disordered region spans residues 84-123; the sequence is PQPGTSKPAGATTASVGKPVTGRPATNRPVTDRPATNNPV. 4 repeat units span residues 139 to 142, 143 to 146, 147 to 150, and 151 to 154. The 4 X 4 AA tandem repeats of A-A-A-S stretch occupies residues 139-154; that stretch reads AAASAAASAAASAAAS. The interval 163-175 is interaction with host DYNLL1; that stretch reads YTTVTTQNTASQT.

The protein belongs to the asfivirus envelope protein p54 family. As to quaternary structure, interacts with the host light chain cytoplasmic dynein DYNLL1; this interaction is critical for intracellular microtubule-dependent virus transport toward viral factories.

Its subcellular location is the virion membrane. The protein localises to the host cytoplasm. It is found in the host cytoskeleton. It localises to the host endoplasmic reticulum membrane. In terms of biological role, inner envelope protein involved, through its interaction with host dynein, in the intracellular microtubule-dependent transport of viral capsid toward viral factories. Seems to induce caspase-3 activation and apoptosis. Plays a role in virion morphogenesis by recruiting and transforming the host ER membranes into the precursors of the viral envelope. Involved in virus attachment to the host cell. The polypeptide is Inner membrane protein p54 (African swine fever virus (isolate Tick/South Africa/Pretoriuskop Pr4/1996) (ASFV)).